The sequence spans 334 residues: Ornithine carbamoyltransferase (334 aa).

Residues 56 to 59 (STRT), Gln-83, Arg-107, and 134 to 137 (HPTQ) contribute to the carbamoyl phosphate site. Residues Asn-168, Asp-232, and 236 to 237 (SM) each bind L-ornithine. Residues 274–275 (CL) and Arg-320 contribute to the carbamoyl phosphate site.

Belongs to the aspartate/ornithine carbamoyltransferase superfamily. OTCase family.

Its subcellular location is the cytoplasm. It carries out the reaction carbamoyl phosphate + L-ornithine = L-citrulline + phosphate + H(+). The protein operates within amino-acid biosynthesis; L-arginine biosynthesis; L-arginine from L-ornithine and carbamoyl phosphate: step 1/3. Reversibly catalyzes the transfer of the carbamoyl group from carbamoyl phosphate (CP) to the N(epsilon) atom of ornithine (ORN) to produce L-citrulline. In Escherichia coli O45:K1 (strain S88 / ExPEC), this protein is Ornithine carbamoyltransferase.